Here is a 223-residue protein sequence, read N- to C-terminus: Coiled-coil domain-containing protein 70 (223 aa).

Positions 129–153 form a coiled coil; that stretch reads NALWERDRNLLQEDKALWEEEKALW. The interval 199–223 is disordered; sequence EQRHQNGPYNANEEPQSTSFPRGRA. A compositionally biased stretch (polar residues) spans 203-223; the sequence is QNGPYNANEEPQSTSFPRGRA.

The protein is Coiled-coil domain-containing protein 70 of Mus musculus (Mouse).